The primary structure comprises 293 residues: Phosphatidylserine decarboxylase proenzyme (293 aa).

Catalysis depends on charge relay system; for autoendoproteolytic cleavage activity residues Asp88, His144, and Ser247. Residue Ser247 is the Schiff-base intermediate with substrate; via pyruvic acid; for decarboxylase activity of the active site. Position 247 is a pyruvic acid (Ser); by autocatalysis (Ser247).

It belongs to the phosphatidylserine decarboxylase family. PSD-B subfamily. Prokaryotic type I sub-subfamily. As to quaternary structure, heterodimer of a large membrane-associated beta subunit and a small pyruvoyl-containing alpha subunit. Pyruvate is required as a cofactor. Post-translationally, is synthesized initially as an inactive proenzyme. Formation of the active enzyme involves a self-maturation process in which the active site pyruvoyl group is generated from an internal serine residue via an autocatalytic post-translational modification. Two non-identical subunits are generated from the proenzyme in this reaction, and the pyruvate is formed at the N-terminus of the alpha chain, which is derived from the carboxyl end of the proenzyme. The autoendoproteolytic cleavage occurs by a canonical serine protease mechanism, in which the side chain hydroxyl group of the serine supplies its oxygen atom to form the C-terminus of the beta chain, while the remainder of the serine residue undergoes an oxidative deamination to produce ammonia and the pyruvoyl prosthetic group on the alpha chain. During this reaction, the Ser that is part of the protease active site of the proenzyme becomes the pyruvoyl prosthetic group, which constitutes an essential element of the active site of the mature decarboxylase.

The protein localises to the cell membrane. The catalysed reaction is a 1,2-diacyl-sn-glycero-3-phospho-L-serine + H(+) = a 1,2-diacyl-sn-glycero-3-phosphoethanolamine + CO2. The protein operates within phospholipid metabolism; phosphatidylethanolamine biosynthesis; phosphatidylethanolamine from CDP-diacylglycerol: step 2/2. Functionally, catalyzes the formation of phosphatidylethanolamine (PtdEtn) from phosphatidylserine (PtdSer). This is Phosphatidylserine decarboxylase proenzyme from Xylella fastidiosa (strain M23).